We begin with the raw amino-acid sequence, 156 residues long: Ribonuclease pancreatic (156 aa).

A signal peptide spans 1-28 (MALEKSLVLLPLLVLILLVLGWVQPSLG). Residues Lys35 and Arg38 each coordinate substrate. Residue His40 is the Proton acceptor of the active site. N-linked (GlcNAc...) asparagine glycans are attached at residues Asn50 and Asn62. 4 disulfides stabilise this stretch: Cys54-Cys112, Cys68-Cys123, Cys86-Cys138, and Cys93-Cys100. Residues 69 to 73 (KPVNT) and Lys94 contribute to the substrate site. A glycan (N-linked (GlcNAc...) asparagine) is linked at Asn104. Arg113 contributes to the substrate binding site. The active-site Proton donor is the His147.

This sequence belongs to the pancreatic ribonuclease family. In terms of assembly, monomer. Interacts with and forms tight 1:1 complexes with RNH1. Dimerization of two such complexes may occur. Interaction with RNH1 inhibits this protein. As to expression, pancreas and other tissues and body fluids (indicating it may have other physiological functions besides its role in digestion).

It localises to the secreted. It carries out the reaction an [RNA] containing cytidine + H2O = an [RNA]-3'-cytidine-3'-phosphate + a 5'-hydroxy-ribonucleotide-3'-[RNA].. The catalysed reaction is an [RNA] containing uridine + H2O = an [RNA]-3'-uridine-3'-phosphate + a 5'-hydroxy-ribonucleotide-3'-[RNA].. Functionally, endonuclease that catalyzes the cleavage of RNA on the 3' side of pyrimidine nucleotides. Acts on single-stranded and double-stranded RNA. The polypeptide is Ribonuclease pancreatic (RNASE1) (Pongo pygmaeus (Bornean orangutan)).